Consider the following 558-residue polypeptide: Formate--tetrahydrofolate ligase (558 aa).

Residue 67–74 (TPAGEGKT) participates in ATP binding.

It belongs to the formate--tetrahydrofolate ligase family.

The catalysed reaction is (6S)-5,6,7,8-tetrahydrofolate + formate + ATP = (6R)-10-formyltetrahydrofolate + ADP + phosphate. It participates in one-carbon metabolism; tetrahydrofolate interconversion. In Ruegeria pomeroyi (strain ATCC 700808 / DSM 15171 / DSS-3) (Silicibacter pomeroyi), this protein is Formate--tetrahydrofolate ligase.